The chain runs to 187 residues: Thermosensitive gluconokinase (187 aa).

10 to 17 serves as a coordination point for ATP; it reads GVSGSGKT.

Belongs to the gluconokinase GntK/GntV family.

The catalysed reaction is D-gluconate + ATP = 6-phospho-D-gluconate + ADP + H(+). It functions in the pathway carbohydrate acid metabolism; L-idonate degradation. This Escherichia coli (strain K12) protein is Thermosensitive gluconokinase (idnK).